The following is a 577-amino-acid chain: ER degradation-enhancing alpha-mannosidase-like protein 2 (577 aa).

The first 21 residues, 1–21 (MPFRLLIPLGLVCVLLPLHHG), serve as a signal peptide directing secretion. Residues Asn-90, Asn-112, Asn-289, and Asn-450 are each glycosylated (N-linked (GlcNAc...) asparagine). The interval 513 to 561 (PKRAQRKTVRSGPWEPQSGPATLSSPANQPREKQPAQQRTPLLSCPSQP) is disordered. 2 stretches are compositionally biased toward polar residues: residues 531-540 (GPATLSSPAN) and 547-561 (PAQQ…PSQP).

Belongs to the glycosyl hydrolase 47 family. Post-translationally, N-glycosylated.

It is found in the endoplasmic reticulum lumen. Functionally, involved in the endoplasmic reticulum-associated degradation (ERAD) pathway that targets misfolded glycoproteins for degradation in an N-glycan-dependent manner. May initiate ERAD by promoting the first mannose trimming step of ERAD substrates, from Man9GlcNAc2 to Man8GlcNAc2. Seems to recognize and bind to exposed hydrophobic regions in target proteins. The protein is ER degradation-enhancing alpha-mannosidase-like protein 2 of Mus musculus (Mouse).